The sequence spans 652 residues: DNA ligase (652 aa).

NAD(+) contacts are provided by residues 29-33 (DSEYD), 78-79 (SL), and Glu107. Residue Lys109 is the N6-AMP-lysine intermediate of the active site. Arg130, Glu164, Lys278, and Lys302 together coordinate NAD(+). Zn(2+) is bound by residues Cys395, Cys398, Cys413, and Cys418. The 76-residue stretch at 577-652 (DQQAALFGLT…IEDEDWLLNL (76 aa)) folds into the BRCT domain.

It belongs to the NAD-dependent DNA ligase family. LigA subfamily. Mg(2+) is required as a cofactor. Mn(2+) serves as cofactor.

The catalysed reaction is NAD(+) + (deoxyribonucleotide)n-3'-hydroxyl + 5'-phospho-(deoxyribonucleotide)m = (deoxyribonucleotide)n+m + AMP + beta-nicotinamide D-nucleotide.. DNA ligase that catalyzes the formation of phosphodiester linkages between 5'-phosphoryl and 3'-hydroxyl groups in double-stranded DNA using NAD as a coenzyme and as the energy source for the reaction. It is essential for DNA replication and repair of damaged DNA. The polypeptide is DNA ligase (Streptococcus equi subsp. equi (strain 4047)).